A 345-amino-acid polypeptide reads, in one-letter code: Fructose-bisphosphate aldolase, plasmid (345 aa).

Ser-50 lines the D-glyceraldehyde 3-phosphate pocket. Asp-83 functions as the Proton donor in the catalytic mechanism. Positions 84, 105, 142, and 198 each coordinate Zn(2+). Position 199 (Gly-199) interacts with dihydroxyacetone phosphate. His-232 is a binding site for Zn(2+). Dihydroxyacetone phosphate contacts are provided by residues 233-235 and 275-278; these read GSS and NIDT.

This sequence belongs to the class II fructose-bisphosphate aldolase family. Homodimer. It depends on Zn(2+) as a cofactor.

The catalysed reaction is beta-D-fructose 1,6-bisphosphate = D-glyceraldehyde 3-phosphate + dihydroxyacetone phosphate. It participates in carbohydrate biosynthesis; Calvin cycle. The protein operates within carbohydrate degradation; glycolysis; D-glyceraldehyde 3-phosphate and glycerone phosphate from D-glucose: step 4/4. Catalyzes the aldol condensation of dihydroxyacetone phosphate (DHAP or glycerone-phosphate) with glyceraldehyde 3-phosphate (G3P) to form fructose 1,6-bisphosphate (FBP) in gluconeogenesis and the reverse reaction in glycolysis. The sequence is that of Fructose-bisphosphate aldolase, plasmid (cbbAP) from Cupriavidus necator (strain ATCC 17699 / DSM 428 / KCTC 22496 / NCIMB 10442 / H16 / Stanier 337) (Ralstonia eutropha).